The primary structure comprises 633 residues: MATREWFVMNAQQTKLALESPPLFAVKKDDDKDHTCDTGEEPYALVGSPVFNPLEDYKREVVSIIDEYFSSGDVEVAASDLMDLGLSEYHPYFVKRLVSMAMDRGNKEKEKASVLLSRLYALVVSPDQIRVGFIRLLESVGDLALDIPDAVNVLALFIARAIVDEILPPVFLARAKKTLPHSSQGFQVILVSENSYLSAPHHAELVETKWGGSTHITVEETKRKISEFLNEYVENGDTREACRCIRELGVSFFHHEIVKSGLVLVMESRTSEPLILKLLKEATEEGLISSSQMAKGFSRVADSLDDLSLDIPSAKTLFESIVPKAIIGGWLDEDSFKERSDQNGGSENLRRFKKDAETIIQEYFLSDDIPELIRSLEDLGLPEYNPVFLKKLITLAMDRKNKEKEMASVFLASLHMEMFSTEDFINGFIMLLESAEDTALDILAASDELALFLARAVIDDVLAPLNLEEISNSLPPKSTGSETIRSARSLISARHAGERLLRSWGGGTGWAVEDAKDKIWKLLEEYEVGGVISEACRCIRDLGMPFFNHEVVKKALVMAMEKKNDRMLNLLQECFAEGIITTNQMTKGFGRVKDSLDDLSLDIPNAEEKFNSYVAHAEENGWLHRDFGCSTDS.

4 MI domains span residues 56-177 (DYKR…RAKK), 220-341 (ETKR…ERSD), 351-472 (RFKK…EISN), and 514-633 (DAKD…STDS). The Nuclear localization signal 1 signature appears at 94 to 101 (VKRLVSMA). Positions 389 to 396 (LKKLITLA) match the Nuclear localization signal 2 motif.

Belongs to the PDCD4 family. Binds to EIF4A1. The association with ribosomes is modulated by cellular energy status and TOR activity. As to expression, mostly expressed, at low levels, in rosette leaves and flower buds, and, to a lower extent, in roots, stems, cauline leaves and flowers.

The protein resides in the nucleus. It is found in the cytoplasm. It localises to the cytosol. In terms of biological role, involved in target of rapamycin (TOR)-regulated translation control, especially under energy-deficient conditions. The protein is MA3 DOMAIN-CONTAINING TRANSLATION REGULATORY FACTOR 4 of Arabidopsis thaliana (Mouse-ear cress).